The sequence spans 116 residues: MNEIIRAIEAEQIRTDLPKFAIGDTIKVYVKIQEGNKERVQMFEGTVIKKQNGGLRETFTVRRVAYGTGVERTFPMNAPIIDKIEIARKGKVRRAKLYYLRDRVGKSAKVKELLTR.

Belongs to the bacterial ribosomal protein bL19 family.

This protein is located at the 30S-50S ribosomal subunit interface and may play a role in the structure and function of the aminoacyl-tRNA binding site. This Clostridium beijerinckii (strain ATCC 51743 / NCIMB 8052) (Clostridium acetobutylicum) protein is Large ribosomal subunit protein bL19.